The following is a 219-amino-acid chain: Ribosome maturation factor RimP (219 aa).

Disordered regions lie at residues 1-38 (MTQR…LATR) and 189-219 (VEFT…DEER). Acidic residues predominate over residues 198-219 (DAFDGTDEAGDFDDDDVEDEER).

Belongs to the RimP family.

It is found in the cytoplasm. Its function is as follows. Required for maturation of 30S ribosomal subunits. The sequence is that of Ribosome maturation factor RimP from Salinispora arenicola (strain CNS-205).